The sequence spans 865 residues: Protein translocase subunit SecA (865 aa).

ATP-binding positions include Gln-85, 103 to 107, and Asp-505; that span reads GEGKT. Residues Cys-847, Cys-849, Cys-858, and His-859 each coordinate Zn(2+).

Belongs to the SecA family. Monomer and homodimer. Part of the essential Sec protein translocation apparatus which comprises SecA, SecYEG and auxiliary proteins SecDF. Other proteins may also be involved. Zn(2+) serves as cofactor.

Its subcellular location is the cell membrane. It localises to the cytoplasm. The enzyme catalyses ATP + H2O + cellular proteinSide 1 = ADP + phosphate + cellular proteinSide 2.. Its function is as follows. Part of the Sec protein translocase complex. Interacts with the SecYEG preprotein conducting channel. Has a central role in coupling the hydrolysis of ATP to the transfer of proteins into and across the cell membrane, serving as an ATP-driven molecular motor driving the stepwise translocation of polypeptide chains across the membrane. This chain is Protein translocase subunit SecA, found in Lactococcus lactis subsp. cremoris (strain SK11).